A 597-amino-acid chain; its full sequence is Elongation factor 4 (597 aa).

The tr-type G domain occupies 2–184; that stretch reads DHIRNFSIIA…ALVAKVPPPK (183 aa). GTP is bound by residues 14-19 and 131-134; these read DHGKST and NKID.

It belongs to the TRAFAC class translation factor GTPase superfamily. Classic translation factor GTPase family. LepA subfamily.

The protein localises to the cell inner membrane. It carries out the reaction GTP + H2O = GDP + phosphate + H(+). Required for accurate and efficient protein synthesis under certain stress conditions. May act as a fidelity factor of the translation reaction, by catalyzing a one-codon backward translocation of tRNAs on improperly translocated ribosomes. Back-translocation proceeds from a post-translocation (POST) complex to a pre-translocation (PRE) complex, thus giving elongation factor G a second chance to translocate the tRNAs correctly. Binds to ribosomes in a GTP-dependent manner. The chain is Elongation factor 4 from Paraburkholderia phytofirmans (strain DSM 17436 / LMG 22146 / PsJN) (Burkholderia phytofirmans).